Reading from the N-terminus, the 243-residue chain is Ribosomal RNA small subunit methyltransferase E 2 (243 aa).

This sequence belongs to the RNA methyltransferase RsmE family.

It localises to the cytoplasm. The catalysed reaction is uridine(1498) in 16S rRNA + S-adenosyl-L-methionine = N(3)-methyluridine(1498) in 16S rRNA + S-adenosyl-L-homocysteine + H(+). Functionally, specifically methylates the N3 position of the uracil ring of uridine 1498 (m3U1498) in 16S rRNA. Acts on the fully assembled 30S ribosomal subunit. The sequence is that of Ribosomal RNA small subunit methyltransferase E 2 (rsmE2) from Borreliella burgdorferi (strain ATCC 35210 / DSM 4680 / CIP 102532 / B31) (Borrelia burgdorferi).